Here is a 339-residue protein sequence, read N- to C-terminus: MPNRYYEKDGNLDFLAGRTVAIIGYGSQGHAHALNLRDSGVDVVVGLPAGSKSTAKAEAAGLKVLSPADAAKTANVVMILVPDHIQADLYNNEIAPHMTAGKTLMFAHGFNIHFGQIKPPVDIDVTMVAPKAPGHRVRELYTEGVGVPALVAVHQNATGQALERALAYALALGCLKAGVIDTNFREETESDLFGEQAVLCGGAAELVRAGFQTLVDAGYAPEIAYFECLHELKLIVDLIQEGGLSYMRYSVSDTAEYGDYTRGPRVVNDQTRAEMKKILSEIQSGEFARQWIEENKTGRKNFLAMREKGHNDQIEVVGRELREMMTFLKKKKEVGVPVA.

One can recognise a KARI N-terminal Rossmann domain in the interval 1-182 (MPNRYYEKDG…GCLKAGVIDT (182 aa)). Residues 25–28 (YGSQ), serine 51, serine 53, and 83–86 (DHIQ) contribute to the NADP(+) site. Residue histidine 108 is part of the active site. Position 134 (glycine 134) interacts with NADP(+). In terms of domain architecture, KARI C-terminal knotted spans 183–328 (NFREETESDL…RELREMMTFL (146 aa)). Aspartate 191, glutamate 195, glutamate 227, and glutamate 231 together coordinate Mg(2+). Substrate is bound at residue serine 252.

Belongs to the ketol-acid reductoisomerase family. It depends on Mg(2+) as a cofactor.

It catalyses the reaction (2R)-2,3-dihydroxy-3-methylbutanoate + NADP(+) = (2S)-2-acetolactate + NADPH + H(+). The catalysed reaction is (2R,3R)-2,3-dihydroxy-3-methylpentanoate + NADP(+) = (S)-2-ethyl-2-hydroxy-3-oxobutanoate + NADPH + H(+). It participates in amino-acid biosynthesis; L-isoleucine biosynthesis; L-isoleucine from 2-oxobutanoate: step 2/4. It functions in the pathway amino-acid biosynthesis; L-valine biosynthesis; L-valine from pyruvate: step 2/4. Functionally, involved in the biosynthesis of branched-chain amino acids (BCAA). Catalyzes an alkyl-migration followed by a ketol-acid reduction of (S)-2-acetolactate (S2AL) to yield (R)-2,3-dihydroxy-isovalerate. In the isomerase reaction, S2AL is rearranged via a Mg-dependent methyl migration to produce 3-hydroxy-3-methyl-2-ketobutyrate (HMKB). In the reductase reaction, this 2-ketoacid undergoes a metal-dependent reduction by NADPH to yield (R)-2,3-dihydroxy-isovalerate. The protein is Ketol-acid reductoisomerase (NADP(+)) of Solibacter usitatus (strain Ellin6076).